A 292-amino-acid chain; its full sequence is Pyruvate formate-lyase 2-activating enzyme (292 aa).

The Radical SAM core domain maps to 33-287 (NDGEGIRTVV…REMAERAGLQ (255 aa)). 3 residues coordinate [4Fe-4S] cluster: cysteine 47, cysteine 51, and cysteine 54. 53 to 55 (WCA) provides a ligand contact to S-adenosyl-L-methionine. One can recognise a 4Fe-4S ferredoxin-type domain in the interval 62–96 (GKIQTVRREAKCLHCAKCLRDADECPSGAFERIGR). Residues glycine 126, 175-177 (DLK), and histidine 247 each bind S-adenosyl-L-methionine.

Belongs to the organic radical-activating enzymes family. [4Fe-4S] cluster serves as cofactor.

It is found in the cytoplasm. It carries out the reaction glycyl-[formate C-acetyltransferase] + reduced [flavodoxin] + S-adenosyl-L-methionine = glycin-2-yl radical-[formate C-acetyltransferase] + semiquinone [flavodoxin] + 5'-deoxyadenosine + L-methionine + H(+). In terms of biological role, activation of pyruvate formate-lyase 2 under anaerobic conditions by generation of an organic free radical, using S-adenosylmethionine and reduced flavodoxin as cosubstrates to produce 5'-deoxy-adenosine. In Escherichia coli (strain K12), this protein is Pyruvate formate-lyase 2-activating enzyme (pflC).